A 349-amino-acid polypeptide reads, in one-letter code: Draxin (349 aa).

An N-terminal signal peptide occupies residues 1–25; sequence MAASSTFFSPSLFLCVLVLIDITLA. A compositionally biased stretch (polar residues) spans 40-53; that stretch reads NHLQNQETWPQQPR. Disordered regions lie at residues 40-63, 119-166, and 246-273; these read NHLQ…HGLA, PHAE…LYKK, and WPSA…EGEP. Positions 54–63 are enriched in basic residues; the sequence is SGHHHKHGLA. Residues 119 to 139 show a composition bias toward basic and acidic residues; that stretch reads PHAERENQSPGSERGKKQNRE. Composition is skewed to basic residues over residues 140-155 and 249-258; these read QRRH…HRGK and AKKKEKRRSK. An N-linked (GlcNAc...) asparagine glycan is attached at asparagine 264.

Belongs to the draxin family.

The protein localises to the secreted. In terms of biological role, chemorepulsive axon guidance protein required for the development of spinal cord and forebrain commissures. Acts as a chemorepulsive guidance protein for commissural axons during development. Able to inhibit or repel neurite outgrowth from dorsal spinal cord and cortical explants in vitro. Binds directly to the neurites and growth cones. The polypeptide is Draxin (Gallus gallus (Chicken)).